We begin with the raw amino-acid sequence, 51 residues long: Insulin (51 aa).

3 disulfide bridges follow: Cys-7–Cys-37, Cys-19–Cys-50, and Cys-36–Cys-41.

Belongs to the insulin family. As to quaternary structure, heterodimer of a B chain and an A chain linked by two disulfide bonds.

Its subcellular location is the secreted. In terms of biological role, insulin decreases blood glucose concentration. It increases cell permeability to monosaccharides, amino acids and fatty acids. It accelerates glycolysis, the pentose phosphate cycle, and glycogen synthesis in liver. The sequence is that of Insulin (INS) from Meleagris gallopavo (Wild turkey).